The following is a 443-amino-acid chain: Trigger factor (443 aa).

The 86-residue stretch at 161–246 folds into the PPIase FKBP-type domain; that stretch reads ADGVTITYHG…VISVTAPRLP (86 aa).

This sequence belongs to the FKBP-type PPIase family. Tig subfamily.

It localises to the cytoplasm. It catalyses the reaction [protein]-peptidylproline (omega=180) = [protein]-peptidylproline (omega=0). Involved in protein export. Acts as a chaperone by maintaining the newly synthesized protein in an open conformation. Functions as a peptidyl-prolyl cis-trans isomerase. This is Trigger factor from Nitrosococcus oceani (strain ATCC 19707 / BCRC 17464 / JCM 30415 / NCIMB 11848 / C-107).